Reading from the N-terminus, the 499-residue chain is Glycerol kinase (499 aa).

Thr-13 is an ADP binding site. 3 residues coordinate ATP: Thr-13, Thr-14, and Ser-15. Position 13 (Thr-13) interacts with sn-glycerol 3-phosphate. Arg-17 is an ADP binding site. Residues Arg-83, Glu-84, Tyr-135, and Asp-244 each contribute to the sn-glycerol 3-phosphate site. 5 residues coordinate glycerol: Arg-83, Glu-84, Tyr-135, Asp-244, and Gln-245. ADP contacts are provided by Thr-266 and Gly-309. Thr-266, Gly-309, Gln-313, and Gly-410 together coordinate ATP. Gly-410 and Asn-414 together coordinate ADP.

It belongs to the FGGY kinase family.

It carries out the reaction glycerol + ATP = sn-glycerol 3-phosphate + ADP + H(+). The protein operates within polyol metabolism; glycerol degradation via glycerol kinase pathway; sn-glycerol 3-phosphate from glycerol: step 1/1. With respect to regulation, inhibited by fructose 1,6-bisphosphate (FBP). Functionally, key enzyme in the regulation of glycerol uptake and metabolism. Catalyzes the phosphorylation of glycerol to yield sn-glycerol 3-phosphate. The polypeptide is Glycerol kinase (Paraburkholderia phymatum (strain DSM 17167 / CIP 108236 / LMG 21445 / STM815) (Burkholderia phymatum)).